A 506-amino-acid polypeptide reads, in one-letter code: Glucosidase 2 subunit beta (506 aa).

A signal peptide spans 1–23 (MKFSQWYTLTAPLLISSLYTVNA). C86 and C108 are disulfide-bonded. 2 coiled-coil regions span residues 172 to 243 (SLVA…LYET) and 338 to 374 (ESYR…LEYH). In terms of domain architecture, MRH spans 279–474 (ESCNNHLSML…KMKSPAACSP (196 aa)). 2 disulfide bridges follow: C431–C460 and C445–C472. The short motif at 503–506 (VDEL) is the ER retrieval sequence element.

In terms of assembly, heterodimer of a catalytic subunit alpha (gls2) and a subunit beta (gtb1).

It localises to the endoplasmic reticulum. Its function is as follows. Subunit of glucosidase 2, which cleaves sequentially the 2 innermost alpha-1,3-linked glucose residues from the Glc(2)Man(9)GlcNAc(2) oligosaccharide precursor of immature glycoproteins in the endoplasmic reticulum (ER). Specifically required for the cleavage of the final glucose. The subunit beta retains the catalytic subunit alpha in the ER. The polypeptide is Glucosidase 2 subunit beta (gtb1) (Schizosaccharomyces pombe (strain 972 / ATCC 24843) (Fission yeast)).